Consider the following 107-residue polypeptide: C-X-C motif chemokine 2 (107 aa).

Positions 1–34 are cleaved as a signal peptide; that stretch reads MARATLSAAPSNPRLLRVALLLLLLVAASRRAAG. Cystine bridges form between Cys43–Cys69 and Cys45–Cys85.

It belongs to the intercrine alpha (chemokine CxC) family. Post-translationally, the N-terminal processed form GRO-beta(5-73) is produced by proteolytic cleavage after secretion from bone marrow stromal cells.

The protein resides in the secreted. In terms of biological role, produced by activated monocytes and neutrophils and expressed at sites of inflammation. Hematoregulatory chemokine, which, in vitro, suppresses hematopoietic progenitor cell proliferation. GRO-beta(5-73) shows a highly enhanced hematopoietic activity. The protein is C-X-C motif chemokine 2 (CXCL2) of Homo sapiens (Human).